A 133-amino-acid chain; its full sequence is Methylglyoxal synthase (133 aa).

The region spanning 1–133 is the MGS-like domain; sequence MPPKPRIALI…ARENGAAQAG (133 aa). Substrate is bound by residues His12, Lys16, 38–41, and 58–59; these read TGTT and SG. Asp64 functions as the Proton donor/acceptor in the catalytic mechanism. His91 lines the substrate pocket.

Belongs to the methylglyoxal synthase family.

It carries out the reaction dihydroxyacetone phosphate = methylglyoxal + phosphate. In terms of biological role, catalyzes the formation of methylglyoxal from dihydroxyacetone phosphate. This is Methylglyoxal synthase from Cupriavidus taiwanensis (strain DSM 17343 / BCRC 17206 / CCUG 44338 / CIP 107171 / LMG 19424 / R1) (Ralstonia taiwanensis (strain LMG 19424)).